Here is a 171-residue protein sequence, read N- to C-terminus: Large ribosomal subunit protein uL10 (171 aa).

This sequence belongs to the universal ribosomal protein uL10 family. As to quaternary structure, part of the ribosomal stalk of the 50S ribosomal subunit. The N-terminus interacts with L11 and the large rRNA to form the base of the stalk. The C-terminus forms an elongated spine to which L12 dimers bind in a sequential fashion forming a multimeric L10(L12)X complex.

Forms part of the ribosomal stalk, playing a central role in the interaction of the ribosome with GTP-bound translation factors. This chain is Large ribosomal subunit protein uL10, found in Phenylobacterium zucineum (strain HLK1).